The chain runs to 206 residues: ATP-dependent Clp protease proteolytic subunit 1 (206 aa).

Catalysis depends on S103, which acts as the Nucleophile. Residue H128 is part of the active site.

It belongs to the peptidase S14 family. Fourteen ClpP subunits assemble into 2 heptameric rings which stack back to back to give a disk-like structure with a central cavity, resembling the structure of eukaryotic proteasomes.

Its subcellular location is the cytoplasm. It carries out the reaction Hydrolysis of proteins to small peptides in the presence of ATP and magnesium. alpha-casein is the usual test substrate. In the absence of ATP, only oligopeptides shorter than five residues are hydrolyzed (such as succinyl-Leu-Tyr-|-NHMec, and Leu-Tyr-Leu-|-Tyr-Trp, in which cleavage of the -Tyr-|-Leu- and -Tyr-|-Trp bonds also occurs).. Functionally, cleaves peptides in various proteins in a process that requires ATP hydrolysis. Has a chymotrypsin-like activity. Plays a major role in the degradation of misfolded proteins. The polypeptide is ATP-dependent Clp protease proteolytic subunit 1 (Protochlamydia amoebophila (strain UWE25)).